Reading from the N-terminus, the 359-residue chain is Histidinol-phosphate aminotransferase (359 aa).

Lys-217 carries the N6-(pyridoxal phosphate)lysine modification.

It belongs to the class-II pyridoxal-phosphate-dependent aminotransferase family. Histidinol-phosphate aminotransferase subfamily. Homodimer. The cofactor is pyridoxal 5'-phosphate.

It carries out the reaction L-histidinol phosphate + 2-oxoglutarate = 3-(imidazol-4-yl)-2-oxopropyl phosphate + L-glutamate. The protein operates within amino-acid biosynthesis; L-histidine biosynthesis; L-histidine from 5-phospho-alpha-D-ribose 1-diphosphate: step 7/9. The polypeptide is Histidinol-phosphate aminotransferase (Citrobacter koseri (strain ATCC BAA-895 / CDC 4225-83 / SGSC4696)).